A 1927-amino-acid chain; its full sequence is Integrin beta-like protein A (1927 aa).

Residues 1 to 20 (MNRILTLFILFISLFIVCEA) form the signal peptide. Residues 21 to 1860 (THFRFGTMSW…KENNNKTVLT (1840 aa)) are Extracellular-facing. Asn309 carries an N-linked (GlcNAc...) asparagine glycan. Positions 425-462 (YGEKCDPVDPCVNGESNEGSQGNGKCTCYYGWEGKNCD) constitute an EGF-like domain. Cystine bridges form between Cys435-Cys450 and Cys452-Cys461. The 188-residue stretch at 522–709 (EVLVLVDSQP…VLSKAVVKAI (188 aa)) folds into the VWFA domain. 5 N-linked (GlcNAc...) asparagine glycosylation sites follow: Asn1122, Asn1516, Asn1717, Asn1723, and Asn1855. Residues 1861–1881 (GAIAGAAAGAGLLAAGAWFLL) form a helical membrane-spanning segment. Over 1882 to 1927 (KKSAPPTDAFFGEGAFADGAVSTNPMYEESGRSAINPLYEASSENL) the chain is Cytoplasmic.

This sequence belongs to the SIB family. As to quaternary structure, interacts with talA/talin.

The protein localises to the membrane. Functionally, implicated in cellular adhesion to substrate or phagocytic particles. This is Integrin beta-like protein A (sibA) from Dictyostelium discoideum (Social amoeba).